Reading from the N-terminus, the 453-residue chain is AP-4 complex subunit mu-1 (453 aa).

An MHD domain is found at 184–452 (KNEVFLDVVE…LSHSNAYVIR (269 aa)). The disordered stretch occupies residues 383–403 (PGLQGPPSRGPSPSAPPLGLG).

It belongs to the adaptor complexes medium subunit family. Adaptor protein complex 4 (AP-4) is a heterotetramer composed of two large adaptins (epsilon-type subunit AP4E1 and beta-type subunit AP4B1), a medium adaptin (mu-type subunit AP4M1) and a small adaptin (sigma-type AP4S1). Interacts with tyrosine-based sorting signals on the cytoplasmic tail of cargo proteins such as APP, ATG9A, LAMP2 and NAGPA. Interacts with the C-terminal domain of GRID2. Interacts with GRIA1 and GRIA2; the interaction is indirect via CACNG3. Interacts with CACNG3; CACNG3 associates GRIA1 and GRIA2 with the adaptor protein complex 4 (AP-4) to target them to the somatodendritic compartment of neurons. Interacts with HOOK1 and HOOK2; the interactions are direct, mediate the interaction between FTS-Hook-FHIP (FHF) complex and AP-4 and the perinuclear distribution of AP-4. In terms of tissue distribution, high levels in the olfactory bulb, the cerebral cortex, the granule and Purkinje cell layers of the cerebellar cortex and the CA3 region of the hippocampus. Low levels found in molecular layer of cerebellum.

It localises to the golgi apparatus. Its subcellular location is the trans-Golgi network membrane. The protein resides in the early endosome. In terms of biological role, component of the adaptor protein complex 4 (AP-4). Adaptor protein complexes are vesicle coat components involved both in vesicle formation and cargo selection. They control the vesicular transport of proteins in different trafficking pathways. AP-4 forms a non clathrin-associated coat on vesicles departing the trans-Golgi network (TGN) and may be involved in the targeting of proteins from the trans-Golgi network (TGN) to the endosomal-lysosomal system. It is also involved in protein sorting to the basolateral membrane in epithelial cells and the proper asymmetric localization of somatodendritic proteins in neurons. Within AP-4, the mu-type subunit AP4M1 is directly involved in the recognition and binding of tyrosine-based sorting signals found in the cytoplasmic part of cargos. The adaptor protein complex 4 (AP-4) may also recognize other types of sorting signal. The sequence is that of AP-4 complex subunit mu-1 from Rattus norvegicus (Rat).